The following is a 283-amino-acid chain: MTVLSTDIPAPNSPSISDVEAYYDAMGPFYKLIWGDSVHGGYWPAGLEDMSLPEAQEHLTNLMIEKTPIKPGQHMLDLGCGTGLPAIRMASAKQCHVHGLTVAHGQVAEAQATIQAMQMQELVHINWGNAMELPFEADFFNAAWAFESIFHMPSRLTVLQEANRVLQAGSYFVLTDIVEVKSLSPEQQQIFFPAFQINTLTTKQGYLDLFAQTGFEQLELIDLTAGIEKTLAHTKLGIEQKRAELAAIYPPEMLGMIEQTWPMVEKIYAEFVRYVLIVARKRG.

S-adenosyl-L-methionine contacts are provided by residues Q106, 129–130, and H151; that span reads NA.

This sequence belongs to the methyltransferase superfamily.

It carries out the reaction (+)-kolavelool + S-adenosyl-L-methionine = (+)-O-methylkolavelool + S-adenosyl-L-homocysteine + H(+). Involved in the biosynthesis of the diterpene (+)-O-methylkolavelool. Catalyzes the transfer of a methyl group from S-adenosyl-L-methionine to the hydroxy group of (+)-kolavelool, forming (+)-O-methylkolavelool. The sequence is that of (+)-O-methylkolavelool synthase from Herpetosiphon aurantiacus (strain ATCC 23779 / DSM 785 / 114-95).